We begin with the raw amino-acid sequence, 126 residues long: Antimicrobial protein 1 (126 aa).

The signal sequence occupies residues 1–24 (MRSSLLLGLTVVLLLGVTVPPCMA).

Strongly expressed in gills, hemocytes and reproductive tract, with weaker expression in muscle, heart and digestive tract. Not detected in eyes and hepatopancreas (at protein level).

The protein resides in the secreted. Has antibacterial activity against the Gram-positive bacteria E.coli (MIC&lt;50 ug/ml) and P.aeruginosa (MIC&lt;25 ug/ml), and the Gram-negative bacteria S.aureus (MIC&lt;100 ug/ml) and S.pyogenes (MIC&lt;50 ug/ml). In Scylla serrata (Mud crab), this protein is Antimicrobial protein 1.